Reading from the N-terminus, the 265-residue chain is Photosystem II 22 kDa protein, chloroplastic (265 aa).

A chloroplast-targeting transit peptide spans 1–59 (MAQTMLLTSGVTAGHFLRNKSPLAQPKVHHLFLSGNSPVALPSRRQSFVPLALFKPKTK). 2 consecutive repeat copies span residues 54-158 (FKPK…FVDD) and 159-264 (PPTG…DGEE). Helical transmembrane passes span 96–116 (VAMI…KGIL), 130–150 (AEPL…GALG), 195–215 (LFVG…EIIT), and 229–249 (IPIQ…FFAA).

It belongs to the ELIP/psbS family.

The protein resides in the plastid. The protein localises to the chloroplast thylakoid membrane. Its function is as follows. Plays an important role in non-photochemical quenching (NPQ), a process maintains the balance between dissipation and utilization of light energy to minimize generation of oxidizing molecules, thereby protecting the plant against photo-oxidative damage; acts upstream of DLDG1. Is not necessary for efficient light harvesting and photosynthesis. The protein is Photosystem II 22 kDa protein, chloroplastic of Arabidopsis thaliana (Mouse-ear cress).